The following is a 272-amino-acid chain: Cerberus (272 aa).

An N-terminal signal peptide occupies residues 1-17 (MHLLLVQLLVLLPLGKA). 4 cysteine pairs are disulfide-bonded: Cys-162/Cys-209, Cys-176/Cys-223, Cys-186/Cys-239, and Cys-190/Cys-241. Positions 162-246 (CRTVPFNQTI…EECQCMVKTE (85 aa)) constitute a CTCK domain. Asn-168 and Asn-222 each carry an N-linked (GlcNAc...) asparagine glycan.

The protein belongs to the DAN family. As to quaternary structure, forms monomers and predominantly dimers. N-glycosylated.

Its subcellular location is the secreted. Its function is as follows. Cytokine that may play a role in anterior neural induction and somite formation during embryogenesis in part, through a BMP-inhibitory mechanism. Can regulate Nodal signaling during gastrulation as well as the formation and patterning of the primitive streak. The polypeptide is Cerberus (Cer1) (Mus musculus (Mouse)).